We begin with the raw amino-acid sequence, 423 residues long: MFIDTARIYIKAGDGGNGIISFRREKYVAYGGPDGGDGGKGGDVIFIADPNLSTLLDFKYRKKYIAQNGENGRGKNQYGKNGEDLYIKVPVGTLIINDETGEIIADLVKPNQKAIVLRGGKGGRGNAKFATPTLKTPRFAESGEKGKEMWVRLELKLLADVGLIGFPNAGKSTLLASCTRAKPKIANYPFTTLTPNLGVVEHKGKSFVMADIPGLIEGAHRGEGLGHDFLRHIERTKMLIHVVDVSASEGRDPIEDFEKINEELKLYSERLLTLSQIVAANKIDIQSGKENFPAFEKEIKKRGYEVYPISALTKVGIDKLLDKTIEILSSIPVEEIKEVPEVIVYTPPEEEETLNIEVKDNTYYLSGTKIDKLLKRVNLQDEHSLRYFEMLLRKSGVIDALKEKGFKSGDTINVRDFEFEYYE.

The Obg domain maps to 1–158; the sequence is MFIDTARIYI…MWVRLELKLL (158 aa). Residues 159-329 form the OBG-type G domain; sequence ADVGLIGFPN…LLDKTIEILS (171 aa). GTP-binding positions include 165-172, 190-194, 211-214, 281-284, and 310-312; these read GFPNAGKS, FTTLT, DIPG, NKID, and SAL. Residues Ser172 and Thr192 each contribute to the Mg(2+) site. An OCT domain is found at 346 to 423; that stretch reads TPPEEEETLN…VRDFEFEYYE (78 aa).

This sequence belongs to the TRAFAC class OBG-HflX-like GTPase superfamily. OBG GTPase family. As to quaternary structure, monomer. Mg(2+) serves as cofactor.

It is found in the cytoplasm. Its function is as follows. An essential GTPase which binds GTP, GDP and possibly (p)ppGpp with moderate affinity, with high nucleotide exchange rates and a fairly low GTP hydrolysis rate. Plays a role in control of the cell cycle, stress response, ribosome biogenesis and in those bacteria that undergo differentiation, in morphogenesis control. The chain is GTPase Obg from Thermoanaerobacter pseudethanolicus (strain ATCC 33223 / 39E) (Clostridium thermohydrosulfuricum).